Here is an 84-residue protein sequence, read N- to C-terminus: UPF0248 protein PF1300 (84 aa).

The protein belongs to the UPF0248 family.

The sequence is that of UPF0248 protein PF1300 from Pyrococcus furiosus (strain ATCC 43587 / DSM 3638 / JCM 8422 / Vc1).